The primary structure comprises 235 residues: uncharacterized protein (235 aa).

This is an uncharacterized protein from Invertebrate iridescent virus 6 (IIV-6).